Reading from the N-terminus, the 528-residue chain is Glycerol kinase 5 (528 aa).

2 residues coordinate ATP: serine 28 and serine 29. The glycerol site is built by arginine 98, aspartate 275, and glutamine 276. ATP contacts are provided by threonine 297, glycine 340, and glycine 440.

This sequence belongs to the FGGY kinase family.

The protein localises to the cytoplasm. The enzyme catalyses glycerol + ATP = sn-glycerol 3-phosphate + ADP + H(+). Its pathway is polyol metabolism; glycerol degradation via glycerol kinase pathway; sn-glycerol 3-phosphate from glycerol: step 1/1. Skin-specific kinase that plays a key role in glycerol metabolism, catalyzing its phosphorylation to produce sn-glycerol 3-phosphate. Involved in skin-specific regulation of sterol regulatory element-binding protein (SREBP) processing and lipid biosynthesis. This Bos taurus (Bovine) protein is Glycerol kinase 5 (GK5).